The primary structure comprises 164 residues: ATP synthase subunit b (164 aa).

Residues 12–32 (FILVTGSVIVLLLLIKAFAWG) traverse the membrane as a helical segment.

Belongs to the ATPase B chain family. As to quaternary structure, F-type ATPases have 2 components, F(1) - the catalytic core - and F(0) - the membrane proton channel. F(1) has five subunits: alpha(3), beta(3), gamma(1), delta(1), epsilon(1). F(0) has three main subunits: a(1), b(2) and c(10-14). The alpha and beta chains form an alternating ring which encloses part of the gamma chain. F(1) is attached to F(0) by a central stalk formed by the gamma and epsilon chains, while a peripheral stalk is formed by the delta and b chains.

The protein localises to the cell membrane. Its function is as follows. F(1)F(0) ATP synthase produces ATP from ADP in the presence of a proton or sodium gradient. F-type ATPases consist of two structural domains, F(1) containing the extramembraneous catalytic core and F(0) containing the membrane proton channel, linked together by a central stalk and a peripheral stalk. During catalysis, ATP synthesis in the catalytic domain of F(1) is coupled via a rotary mechanism of the central stalk subunits to proton translocation. Functionally, component of the F(0) channel, it forms part of the peripheral stalk, linking F(1) to F(0). In Streptococcus equi subsp. zooepidemicus (strain MGCS10565), this protein is ATP synthase subunit b.